A 669-amino-acid polypeptide reads, in one-letter code: JmjC domain-containing histone demethylation protein 1 (669 aa).

The disordered stretch occupies residues 1–61 (MTAVAASSRV…RRKKPRTELV (61 aa)). Composition is skewed to polar residues over residues 16–27 (ASSSAHPRTLRS) and 36–49 (HDSS…QSKQ). The segment at 65–126 (ELDCAACPAV…KWYCQPCITR (62 aa)) adopts a PHD-type zinc-finger fold. 2 disordered regions span residues 131–150 (FESG…RPPR) and 220–256 (PPDR…QATH). The span at 246-255 (KPARAKKQAT) shows a compositional bias: basic residues. The JmjC domain maps to 332-494 (VTGTPMQAYV…TQWKLVEIEE (163 aa)). Fe cation-binding residues include His-390 and Asp-392. Lys-407 provides a ligand contact to substrate. Residue His-462 participates in Fe cation binding.

The protein belongs to the JHDM1 histone demethylase family. The cofactor is Fe(2+).

The protein resides in the nucleus. It catalyses the reaction N(6),N(6)-dimethyl-L-lysyl(36)-[histone H3] + 2 2-oxoglutarate + 2 O2 = L-lysyl(36)-[histone H3] + 2 formaldehyde + 2 succinate + 2 CO2. Histone demethylase that specifically demethylates 'Lys-36' of histone H3, thereby playing a central role in histone code. The polypeptide is JmjC domain-containing histone demethylation protein 1 (JHD1) (Mycosarcoma maydis (Corn smut fungus)).